A 43-amino-acid chain; its full sequence is Potassium channel toxin gamma-KTx 4.3 (43 aa).

Disulfide bonds link Cys5/Cys23, Cys11/Cys34, Cys20/Cys39, and Cys24/Cys41.

It belongs to the ergtoxin family. Gamma-KTx 4 subfamily. Expressed by the venom gland.

Its subcellular location is the secreted. Functionally, reversibly blocks Kv11/ERG potassium channels. The protein is Potassium channel toxin gamma-KTx 4.3 of Centruroides exilicauda (Bark scorpion).